The chain runs to 962 residues: Leucine--tRNA ligase (962 aa).

Residues 40 to 51 (PYPSGAGLHVGH) carry the 'HIGH' region motif. The tract at residues 548-570 (SRKLSGQHDEPNSNVTPSAVEGS) is disordered. The short motif at 737-741 (KMSKS) is the 'KMSKS' region element. Lys-740 lines the ATP pocket.

Belongs to the class-I aminoacyl-tRNA synthetase family.

It localises to the cytoplasm. The enzyme catalyses tRNA(Leu) + L-leucine + ATP = L-leucyl-tRNA(Leu) + AMP + diphosphate. In Christiangramia forsetii (strain DSM 17595 / CGMCC 1.15422 / KT0803) (Gramella forsetii), this protein is Leucine--tRNA ligase.